Reading from the N-terminus, the 305-residue chain is Ornithine carbamoyltransferase (305 aa).

Carbamoyl phosphate is bound by residues 48–51, Arg99, and 126–129; these read STRT and HPCQ. Residues Asn157, Asp222, and 226–227 each bind L-ornithine; that span reads SM. Carbamoyl phosphate is bound by residues 262 to 263 and Arg290; that span reads CL.

Belongs to the aspartate/ornithine carbamoyltransferase superfamily. OTCase family.

It localises to the cytoplasm. The catalysed reaction is carbamoyl phosphate + L-ornithine = L-citrulline + phosphate + H(+). Its pathway is amino-acid biosynthesis; L-arginine biosynthesis; L-arginine from L-ornithine and carbamoyl phosphate: step 1/3. Reversibly catalyzes the transfer of the carbamoyl group from carbamoyl phosphate (CP) to the N(epsilon) atom of ornithine (ORN) to produce L-citrulline. This is Ornithine carbamoyltransferase (argF) from Methanocaldococcus jannaschii (strain ATCC 43067 / DSM 2661 / JAL-1 / JCM 10045 / NBRC 100440) (Methanococcus jannaschii).